The following is a 443-amino-acid chain: Histidinol dehydrogenase (443 aa).

Residues Y141, Q203, and N226 each coordinate NAD(+). 3 residues coordinate substrate: S249, Q271, and H274. Zn(2+) is bound by residues Q271 and H274. Residues E339 and H340 each act as proton acceptor in the active site. Positions 340, 373, 427, and 432 each coordinate substrate. Residue D373 coordinates Zn(2+). H432 contacts Zn(2+).

Belongs to the histidinol dehydrogenase family. Requires Zn(2+) as cofactor.

It carries out the reaction L-histidinol + 2 NAD(+) + H2O = L-histidine + 2 NADH + 3 H(+). Its pathway is amino-acid biosynthesis; L-histidine biosynthesis; L-histidine from 5-phospho-alpha-D-ribose 1-diphosphate: step 9/9. Its function is as follows. Catalyzes the sequential NAD-dependent oxidations of L-histidinol to L-histidinaldehyde and then to L-histidine. In Chlorobium luteolum (strain DSM 273 / BCRC 81028 / 2530) (Pelodictyon luteolum), this protein is Histidinol dehydrogenase.